A 202-amino-acid polypeptide reads, in one-letter code: ATP-dependent Clp protease proteolytic subunit (202 aa).

The active-site Nucleophile is the Ser-106. The active site involves His-131.

It belongs to the peptidase S14 family. In terms of assembly, fourteen ClpP subunits assemble into 2 heptameric rings which stack back to back to give a disk-like structure with a central cavity, resembling the structure of eukaryotic proteasomes.

It localises to the cytoplasm. It carries out the reaction Hydrolysis of proteins to small peptides in the presence of ATP and magnesium. alpha-casein is the usual test substrate. In the absence of ATP, only oligopeptides shorter than five residues are hydrolyzed (such as succinyl-Leu-Tyr-|-NHMec, and Leu-Tyr-Leu-|-Tyr-Trp, in which cleavage of the -Tyr-|-Leu- and -Tyr-|-Trp bonds also occurs).. Functionally, cleaves peptides in various proteins in a process that requires ATP hydrolysis. Has a chymotrypsin-like activity. Plays a major role in the degradation of misfolded proteins. This chain is ATP-dependent Clp protease proteolytic subunit, found in Verminephrobacter eiseniae (strain EF01-2).